The primary structure comprises 333 residues: Anthranilate phosphoribosyltransferase (333 aa).

Residues Gly-80, 83–84 (GD), Ser-88, 90–93 (NIST), 108–116 (KHGNRSVSS), and Ser-120 contribute to the 5-phospho-alpha-D-ribose 1-diphosphate site. Residue Gly-80 coordinates anthranilate. A Mg(2+)-binding site is contributed by Ser-92. Asn-111 is a binding site for anthranilate. Position 166 (Arg-166) interacts with anthranilate. The Mg(2+) site is built by Asp-224 and Glu-225.

This sequence belongs to the anthranilate phosphoribosyltransferase family. As to quaternary structure, homodimer. The cofactor is Mg(2+).

It catalyses the reaction N-(5-phospho-beta-D-ribosyl)anthranilate + diphosphate = 5-phospho-alpha-D-ribose 1-diphosphate + anthranilate. Its pathway is amino-acid biosynthesis; L-tryptophan biosynthesis; L-tryptophan from chorismate: step 2/5. Catalyzes the transfer of the phosphoribosyl group of 5-phosphorylribose-1-pyrophosphate (PRPP) to anthranilate to yield N-(5'-phosphoribosyl)-anthranilate (PRA). The sequence is that of Anthranilate phosphoribosyltransferase from Yersinia pseudotuberculosis serotype O:1b (strain IP 31758).